The following is a 381-amino-acid chain: 1-deoxy-D-xylulose 5-phosphate reductoisomerase (381 aa).

The NADPH site is built by T10, G11, S12, I13, and N120. K121 is a 1-deoxy-D-xylulose 5-phosphate binding site. E122 contacts NADPH. D146 is a binding site for Mn(2+). 1-deoxy-D-xylulose 5-phosphate-binding residues include S147, E148, S172, and H195. E148 is a binding site for Mn(2+). Position 201 (G201) interacts with NADPH. 1-deoxy-D-xylulose 5-phosphate is bound by residues S208, N213, K214, and E217. A Mn(2+)-binding site is contributed by E217.

The protein belongs to the DXR family. Mg(2+) serves as cofactor. It depends on Mn(2+) as a cofactor.

It catalyses the reaction 2-C-methyl-D-erythritol 4-phosphate + NADP(+) = 1-deoxy-D-xylulose 5-phosphate + NADPH + H(+). It participates in isoprenoid biosynthesis; isopentenyl diphosphate biosynthesis via DXP pathway; isopentenyl diphosphate from 1-deoxy-D-xylulose 5-phosphate: step 1/6. Catalyzes the NADPH-dependent rearrangement and reduction of 1-deoxy-D-xylulose-5-phosphate (DXP) to 2-C-methyl-D-erythritol 4-phosphate (MEP). The protein is 1-deoxy-D-xylulose 5-phosphate reductoisomerase of Thermodesulfovibrio yellowstonii (strain ATCC 51303 / DSM 11347 / YP87).